The sequence spans 282 residues: NADPH-dependent 7-cyano-7-deazaguanine reductase (282 aa).

Residue 90–92 (IES) coordinates substrate. Residue 92-93 (SK) coordinates NADPH. Cys190 serves as the catalytic Thioimide intermediate. The active-site Proton donor is Asp197. Residue 229–230 (HE) participates in substrate binding. An NADPH-binding site is contributed by 258 to 259 (RG).

Belongs to the GTP cyclohydrolase I family. QueF type 2 subfamily. As to quaternary structure, homodimer.

The protein resides in the cytoplasm. The catalysed reaction is 7-aminomethyl-7-carbaguanine + 2 NADP(+) = 7-cyano-7-deazaguanine + 2 NADPH + 3 H(+). It participates in tRNA modification; tRNA-queuosine biosynthesis. Functionally, catalyzes the NADPH-dependent reduction of 7-cyano-7-deazaguanine (preQ0) to 7-aminomethyl-7-deazaguanine (preQ1). This chain is NADPH-dependent 7-cyano-7-deazaguanine reductase, found in Aeromonas salmonicida (strain A449).